The following is a 1048-amino-acid chain: Pleckstrin homology domain-containing family A member 6 (1048 aa).

Positions 1-22 are enriched in polar residues; the sequence is MSNKTGGKRPATTNSDIPNHNM. Positions 1–36 are disordered; that stretch reads MSNKTGGKRPATTNSDIPNHNMVSEVPPERPSVRAT. Residues 59–158 enclose the PH domain; that stretch reads PVTKAGWLFK…WIQAMGEAAR (100 aa). 2 disordered regions span residues 165 to 318 and 448 to 467; these read QKSV…MNQL and SLQP…SYSR. The span at 201-233 shows a compositional bias: basic and acidic residues; that stretch reads PEPEAKTRGEGDGRGCEKAERRPERPEVKKEPP. Phosphoserine occurs at positions 247 and 251. The segment covering 267-290 has biased composition (polar residues); sequence AQPNGWQYHSPSRPGSTAFPSQDG. Phosphoserine is present on residues Ser-314, Ser-459, Ser-461, and Ser-472. Over residues 456-465 the composition is skewed to polar residues; that stretch reads VPRSPSQGSY. A Phosphotyrosine modification is found at Tyr-492. At Ser-591 the chain carries Phosphoserine. Residues 663–746 are disordered; that stretch reads RKNNPSRGTD…HQTLPLDTPR (84 aa). The span at 687–711 shows a compositional bias: low complexity; it reads SSNSPASPLSSASLTSPLSPFSLVS. Over residues 712–721 the composition is skewed to polar residues; it reads GSQGSPTKPG. Thr-744 carries the phosphothreonine modification. Residue Ser-777 is modified to Phosphoserine. Phosphothreonine is present on Thr-784. A disordered region spans residues 793–858; the sequence is ASGLTNGLSS…PAPDPSPRPA (66 aa). Residues 794–803 show a composition bias toward polar residues; sequence SGLTNGLSSQ. The residue at position 801 (Ser-801) is a Phosphoserine. Positions 815-827 are enriched in basic and acidic residues; sequence GKVKMSVEEQIDR. The span at 828 to 842 shows a compositional bias: basic residues; it reads MRRHQSGSMREKRRS. Phosphoserine is present on residues Ser-848, Ser-854, and Ser-867. Residue Thr-920 is modified to Phosphothreonine. A Phosphoserine modification is found at Ser-940. Disordered regions lie at residues 968–989 and 1005–1048; these read PIGE…QEQE and RGRM…TMRV. Thr-1015 carries the phosphothreonine modification. The segment covering 1016 to 1030 has biased composition (pro residues); the sequence is PSPPTSPASPAPPAN. Residue Ser-1017 is modified to Phosphoserine. The residue at position 1020 (Thr-1020) is a Phosphothreonine. Phosphoserine is present on residues Ser-1021 and Ser-1024.

Highly expressed in heart, kidney and throughout the brain.

This Homo sapiens (Human) protein is Pleckstrin homology domain-containing family A member 6 (PLEKHA6).